Consider the following 86-residue polypeptide: Small ribosomal subunit protein bS16 (86 aa).

Belongs to the bacterial ribosomal protein bS16 family.

The polypeptide is Small ribosomal subunit protein bS16 (Bordetella bronchiseptica (strain ATCC BAA-588 / NCTC 13252 / RB50) (Alcaligenes bronchisepticus)).